The primary structure comprises 498 residues: Glycerol kinase (498 aa).

An ADP-binding site is contributed by Thr14. ATP is bound by residues Thr14, Thr15, and Ser16. A sn-glycerol 3-phosphate-binding site is contributed by Thr14. Arg18 contacts ADP. Sn-glycerol 3-phosphate is bound by residues Arg84, Glu85, Tyr136, and Asp243. Glycerol is bound by residues Arg84, Glu85, Tyr136, Asp243, and Gln244. 2 residues coordinate ADP: Thr265 and Gly308. The ATP site is built by Thr265, Gly308, Gln312, and Gly409. Residues Gly409 and Asn413 each contribute to the ADP site.

This sequence belongs to the FGGY kinase family.

It catalyses the reaction glycerol + ATP = sn-glycerol 3-phosphate + ADP + H(+). Its pathway is polyol metabolism; glycerol degradation via glycerol kinase pathway; sn-glycerol 3-phosphate from glycerol: step 1/1. With respect to regulation, inhibited by fructose 1,6-bisphosphate (FBP). In terms of biological role, key enzyme in the regulation of glycerol uptake and metabolism. Catalyzes the phosphorylation of glycerol to yield sn-glycerol 3-phosphate. The protein is Glycerol kinase of Shewanella frigidimarina (strain NCIMB 400).